The chain runs to 128 residues: Transcription antitermination protein NusB (128 aa).

This sequence belongs to the NusB family.

Functionally, involved in transcription antitermination. Required for transcription of ribosomal RNA (rRNA) genes. Binds specifically to the boxA antiterminator sequence of the ribosomal RNA (rrn) operons. In Exiguobacterium sp. (strain ATCC BAA-1283 / AT1b), this protein is Transcription antitermination protein NusB.